We begin with the raw amino-acid sequence, 189 residues long: Large ribosomal subunit protein bL9 (189 aa).

The protein belongs to the bacterial ribosomal protein bL9 family.

Its function is as follows. Binds to the 23S rRNA. This Brucella canis (strain ATCC 23365 / NCTC 10854 / RM-666) protein is Large ribosomal subunit protein bL9.